A 473-amino-acid polypeptide reads, in one-letter code: Flavin-dependent L-tryptophan oxidase RebO (473 aa).

An N-terminal signal peptide occupies residues 1-21 (MSRGHKKITVLGAGVAGLVAA). Residues 15 to 16 (VA), 35 to 36 (EG), Arg-43, 61 to 64 (GAMR), Glu-444, and 451 to 456 (AWIDGA) each bind FAD.

The protein belongs to the flavin monoamine oxidase family. RebO subfamily. In terms of assembly, homodimer. It depends on FAD as a cofactor.

The catalysed reaction is 7-chloro-L-tryptophan + O2 = 3-(7-chloroindol-3-yl)-2-iminopropanoate + H2O2. It carries out the reaction L-tryptophan + O2 = 2-iminio-3-(indol-3-yl)propanoate + H2O2. Its function is as follows. Involved in the biosynthesis of the indolocarbazole antitumor agent rebeccamycin. It generates the imine form of 7-chloroindole 3-pyruvate (7Cl-IPA) from 7-chloro-L-tryptophan (7Cl-Trp), with concomitant two-electron reduction of O(2) to H(2)O(2). The enzyme is also active with L-tryptophan as substrate. The sequence is that of Flavin-dependent L-tryptophan oxidase RebO (rebO) from Lentzea aerocolonigenes (Lechevalieria aerocolonigenes).